The chain runs to 460 residues: MLDIVIMAAGKGTRMKSSRPKVLHTLAGRALLQHVLATAAGLGAQRLITITGHGAEQVEAAMRSAFPAAPLAFVRQEPQLGTGHAVQQAVPLLDDAGTTLILNGDTPLIEASTARALVDACDGTRLALLTIDLADPTGYGRILRDGDGRGEKLLGIVEHKDASAEQRAVREVYTGMMAAPTALLKRWLACLSNDNAQREYYLTDVVAMAVADGVAVVAAQPASETEVLGVNSPLQLADLERRLQRKQAEALLEAGVRLADPARFDLRGTLGCGSDVEIDVNCVFEGRVELGDGVRIGAHCVIRDARIAAGAVIHPFTHIDGAEVGAGALVGPFARLRPGAELGAEVHIGNFVEVKNSTLARGAKANHLAYLGDATVGERVNYGAGSITANYDGANKHRTVIGDDVHVGSNCVLVAPVTLGAGATIGGGSTISKDVPAGQLGVARARQTVIAGWQRPQKKR.

Positions 1-233 are pyrophosphorylase; that stretch reads MLDIVIMAAG…ETEVLGVNSP (233 aa). UDP-N-acetyl-alpha-D-glucosamine-binding positions include Lys-21, Gln-76, and 81 to 82; that span reads GT. Asp-105 contributes to the Mg(2+) binding site. Gly-140, Glu-158, and Asn-231 together coordinate UDP-N-acetyl-alpha-D-glucosamine. Residue Asn-231 participates in Mg(2+) binding. A linker region spans residues 234–254; the sequence is LQLADLERRLQRKQAEALLEA. Residues 255–460 are N-acetyltransferase; it reads GVRLADPARF…AGWQRPQKKR (206 aa). Residues Arg-337 and Lys-355 each contribute to the UDP-N-acetyl-alpha-D-glucosamine site. The Proton acceptor role is filled by His-367. Positions 370 and 381 each coordinate UDP-N-acetyl-alpha-D-glucosamine. Residues Ala-384, 390 to 391, Ser-409, Gly-427, and Arg-444 each bind acetyl-CoA; that span reads NY.

The protein in the N-terminal section; belongs to the N-acetylglucosamine-1-phosphate uridyltransferase family. This sequence in the C-terminal section; belongs to the transferase hexapeptide repeat family. In terms of assembly, homotrimer. Requires Mg(2+) as cofactor.

The protein localises to the cytoplasm. It carries out the reaction alpha-D-glucosamine 1-phosphate + acetyl-CoA = N-acetyl-alpha-D-glucosamine 1-phosphate + CoA + H(+). It catalyses the reaction N-acetyl-alpha-D-glucosamine 1-phosphate + UTP + H(+) = UDP-N-acetyl-alpha-D-glucosamine + diphosphate. It participates in nucleotide-sugar biosynthesis; UDP-N-acetyl-alpha-D-glucosamine biosynthesis; N-acetyl-alpha-D-glucosamine 1-phosphate from alpha-D-glucosamine 6-phosphate (route II): step 2/2. It functions in the pathway nucleotide-sugar biosynthesis; UDP-N-acetyl-alpha-D-glucosamine biosynthesis; UDP-N-acetyl-alpha-D-glucosamine from N-acetyl-alpha-D-glucosamine 1-phosphate: step 1/1. Its pathway is bacterial outer membrane biogenesis; LPS lipid A biosynthesis. Its function is as follows. Catalyzes the last two sequential reactions in the de novo biosynthetic pathway for UDP-N-acetylglucosamine (UDP-GlcNAc). The C-terminal domain catalyzes the transfer of acetyl group from acetyl coenzyme A to glucosamine-1-phosphate (GlcN-1-P) to produce N-acetylglucosamine-1-phosphate (GlcNAc-1-P), which is converted into UDP-GlcNAc by the transfer of uridine 5-monophosphate (from uridine 5-triphosphate), a reaction catalyzed by the N-terminal domain. This is Bifunctional protein GlmU from Methylibium petroleiphilum (strain ATCC BAA-1232 / LMG 22953 / PM1).